A 719-amino-acid polypeptide reads, in one-letter code: UvrABC system protein B (719 aa).

The region spanning 49–435 (RRINAGERDV…TGGEFVEQVI (387 aa)) is the Helicase ATP-binding domain. ATP is bound at residue 62-69 (GATGTGKS). Positions 115–138 (YYDYYQPEAYIAQTDTYIEKDSSI) match the Beta-hairpin motif. The Helicase C-terminal domain occupies 453 to 606 (QIDDLIGEIR…QIAYNEANGI (154 aa)). The disordered stretch occupies residues 635–654 (GGSGRNASRGRRAQGEPGRA). Positions 674–709 (ADLIKDLTAQMMAAARDLQFELAARFRDEIADLKRE) constitute a UVR domain.

The protein belongs to the UvrB family. As to quaternary structure, forms a heterotetramer with UvrA during the search for lesions. Interacts with UvrC in an incision complex.

The protein resides in the cytoplasm. In terms of biological role, the UvrABC repair system catalyzes the recognition and processing of DNA lesions. A damage recognition complex composed of 2 UvrA and 2 UvrB subunits scans DNA for abnormalities. Upon binding of the UvrA(2)B(2) complex to a putative damaged site, the DNA wraps around one UvrB monomer. DNA wrap is dependent on ATP binding by UvrB and probably causes local melting of the DNA helix, facilitating insertion of UvrB beta-hairpin between the DNA strands. Then UvrB probes one DNA strand for the presence of a lesion. If a lesion is found the UvrA subunits dissociate and the UvrB-DNA preincision complex is formed. This complex is subsequently bound by UvrC and the second UvrB is released. If no lesion is found, the DNA wraps around the other UvrB subunit that will check the other stand for damage. The sequence is that of UvrABC system protein B from Mycobacterium tuberculosis (strain CDC 1551 / Oshkosh).